The chain runs to 258 residues: UPF0246 protein YaaA (258 aa).

It belongs to the UPF0246 family.

This chain is UPF0246 protein YaaA, found in Escherichia coli O7:K1 (strain IAI39 / ExPEC).